Reading from the N-terminus, the 930-residue chain is MGGSCAQRRRAGPRQVLFPLLLPLFYPTLSEPIRYSIPEELAKGSVVGNLAKDLGLSVLDVSARKLRVSAEKLHFSVDAESGDLLVKNRIDREQICKERRRCELQLEAVVENPLNIFHVIVVIEDVNDHAPQFDKKEIHLEIFESASAGTRLSLDPATDPDININSIKDYKINSNPYFSLMVRVNSDGGKYPELSLEKLLDREEQRSHSLILTALDGGDPPRSATAHIEISVKDTNDNPPVFSRDEYRISLSENLPPGSPVLQVTATDQDEGVNAEINYYFRSTAQSTKHMFSLDEKTGMIKNNQSFDFEDVERYTMEVEAKDGGGLSTQCKVIIEILDENDNSPEIIITSLSDQILENSPPGMVVALFKTRDLDFGGNGEVRCNIETDIPFKIYSSSNNYYKLVTDGALDREQTPEYNVTIVATDRGKPPLSSSRSITLYVADINDNAPVFDQTSYVVHVAENNPPGASIAQVSASDPDLGLNGHISYSIVASDLEPLAVSSYVSVSAQSGVVFAQRAFDHEQLRAFALTLQARDHGSPTLSANVSLRVLVGDRNDNAPRVLYPALGPDGSAFFDMVPRSAEPGYLVTKVVAVDADSGHNAWLSYHVLQASEPGLFSLGLRTGEVRTARALGDRDAARQRLLVAVRDGGQPPLSATATLHLVFADNLQEILPDLSDRPVLSDPQAELQFYLVVALALISVLFLLAVILAIALRLRRSLSPATWDCFHPGLCVKSGPVVPPNYSEGTLPYSYNLCIAHTGTKEFNFLKCSVPLHSNEDMVCSVSPGALIPPHGGEDLTSHPETLTSQAPPNTDWRFSQAQRPGTSGSQNGDDTGTWPNNQFDTEMLQAMILASASEAADGSSTLGGGAGTMGLSARYGPQFTLQHVPDYRQNVYIPGSNATLTNAAGKRDGKAPAGGNGNKKKSGKKEKK.

The N-terminal stretch at 1–30 (MGGSCAQRRRAGPRQVLFPLLLPLFYPTLS) is a signal peptide. Cadherin domains lie at 31–133 (EPIR…APQF), 134–242 (DKKE…PPVF), 243–347 (SRDE…SPEI), 348–452 (IITS…APVF), 453–562 (DQTS…APRV), and 570–675 (DGSA…LPDL). At 31–691 (EPIRYSIPEE…SDPQAELQFY (661 aa)) the chain is on the extracellular side. N-linked (GlcNAc...) asparagine glycosylation is found at Asn-304, Asn-419, and Asn-545. A helical membrane pass occupies residues 692–712 (LVVALALISVLFLLAVILAIA). Over 713–930 (LRLRRSLSPA…KKKSGKKEKK (218 aa)) the chain is Cytoplasmic. 2 disordered regions span residues 791–839 (PHGG…WPNN) and 900–930 (ATLT…KEKK). Positions 800-839 (HPETLTSQAPPNTDWRFSQAQRPGTSGSQNGDDTGTWPNN) are enriched in polar residues. Positions 920 to 930 (NKKKSGKKEKK) are enriched in basic residues.

It localises to the cell membrane. Functionally, potential calcium-dependent cell-adhesion protein. May be involved in the establishment and maintenance of specific neuronal connections in the brain. This chain is Protocadherin gamma-B6 (PCDHGB6), found in Homo sapiens (Human).